The sequence spans 500 residues: L-arabinose isomerase (500 aa).

Mn(2+) contacts are provided by glutamate 306, glutamate 333, histidine 350, and histidine 450.

This sequence belongs to the arabinose isomerase family. As to quaternary structure, homohexamer. Requires Mn(2+) as cofactor.

It carries out the reaction beta-L-arabinopyranose = L-ribulose. It participates in carbohydrate degradation; L-arabinose degradation via L-ribulose; D-xylulose 5-phosphate from L-arabinose (bacterial route): step 1/3. Catalyzes the conversion of L-arabinose to L-ribulose. This is L-arabinose isomerase from Yersinia pseudotuberculosis serotype O:3 (strain YPIII).